The primary structure comprises 292 residues: Protease HtpX (292 aa).

A run of 2 helical transmembrane segments spans residues 5-25 (VVLF…VMSV) and 34-54 (SGLL…SLLL). His-140 provides a ligand contact to Zn(2+). Glu-141 is a catalytic residue. Position 144 (His-144) interacts with Zn(2+). Helical transmembrane passes span 155-175 (LLQG…GGII) and 193-213 (IIVF…AMWF). Residue Glu-218 coordinates Zn(2+).

This sequence belongs to the peptidase M48B family. It depends on Zn(2+) as a cofactor.

It localises to the cell inner membrane. The protein is Protease HtpX of Xanthomonas campestris pv. campestris (strain B100).